Here is a 142-residue protein sequence, read N- to C-terminus: Large ribosomal subunit protein uL13 (142 aa).

This sequence belongs to the universal ribosomal protein uL13 family. In terms of assembly, part of the 50S ribosomal subunit.

Its function is as follows. This protein is one of the early assembly proteins of the 50S ribosomal subunit, although it is not seen to bind rRNA by itself. It is important during the early stages of 50S assembly. This is Large ribosomal subunit protein uL13 from Burkholderia cenocepacia (strain ATCC BAA-245 / DSM 16553 / LMG 16656 / NCTC 13227 / J2315 / CF5610) (Burkholderia cepacia (strain J2315)).